The following is a 739-amino-acid chain: MEHTYQYAWIIPFLPFPVTISIGLGLLLVPTATKNLRRIWAFFSVLLLSIAMVFSADLAIQQINGSFIYQYSWSWTINNTFSLEFGYLIDPLTSIMLILITTVGIMVLIYSDNYMSHDQGYLRFFAYMSFFNTSMLGLVTSSNLIQIYIFWELVGMCSYLLIGFWFTRPTAANACQKAFVTNRVGDFGLLLGILGLYWITGSFEFRDLFEILKNLIHNNEVNSLFAALCASLLFVGAVAKSAQFPLHVWLPDAMEGPTPISALIHAATMVAAGIFLVARLLPLFTVIPYIMNFISLIGIITVLLGATLALAQRDIKRSLAYSTMSQLGYIMLAPGIGSYRAALFHLITHAYSKALLFLGSGSIIHSMEPIVGYSPEKSQNMILMGGLRRYVPITKTTFFLGTLSLCGMPPLACFWSKDEILNDTWLYSPIFAIIAWSTAGLTAFYMFRVYLLTFDGHLQVHFQNFSSTKNSSFYSISIWGKEVPKPLNVNLFLSTMNTNEKMSFFSKNTYQIDRNGKNRIRYFSTQFGNKYTSMYPHESDNTMLFPMLVLVLFTLFIGFIGIPFDQGVIDLDILSKWLTPSINLLHSNSGDSFDWYEFVTNAIYSVTISFLGIFLAYIFYGSVYSSFQNLDLINSFVRIDSKRILSDRIINGIYNWSYNRGYIDVFYGKVLSNTIRGLAELIHFFDRRVIDGITNGVGVVSFFVGEGIKSVGGGRISSYIFLYAFSVSICLIIYYFFRF.

A run of 16 helical transmembrane segments spans residues 9-29 (WIIP…LLLV), 39-59 (IWAF…ADLA), 89-109 (IDPL…MVLI), 125-145 (FAYM…SNLI), 147-167 (IYIF…FWFT), 185-205 (GDFG…SFEF), 224-244 (LFAA…SAQF), 258-278 (TPIS…FLVA), 280-300 (LLPL…IGII), 327-347 (LGYI…FHLI), 354-374 (ALLF…VGYS), 396-416 (TTFF…CFWS), 425-445 (WLYS…TAFY), 544-564 (LFPM…GIPF), 603-623 (IYSV…YGSV), and 716-736 (ISSY…IYYF).

Belongs to the complex I subunit 5 family. As to quaternary structure, NDH is composed of at least 16 different subunits, 5 of which are encoded in the nucleus.

The protein localises to the plastid. It is found in the chloroplast thylakoid membrane. The enzyme catalyses a plastoquinone + NADH + (n+1) H(+)(in) = a plastoquinol + NAD(+) + n H(+)(out). It catalyses the reaction a plastoquinone + NADPH + (n+1) H(+)(in) = a plastoquinol + NADP(+) + n H(+)(out). Functionally, NDH shuttles electrons from NAD(P)H:plastoquinone, via FMN and iron-sulfur (Fe-S) centers, to quinones in the photosynthetic chain and possibly in a chloroplast respiratory chain. The immediate electron acceptor for the enzyme in this species is believed to be plastoquinone. Couples the redox reaction to proton translocation, and thus conserves the redox energy in a proton gradient. The chain is NAD(P)H-quinone oxidoreductase subunit 5, chloroplastic (ndhF) from Acorus calamus (Sweet flag).